The primary structure comprises 481 residues: Abl interactor 1 (481 aa).

N-acetylalanine is present on A2. A required for binding to WASF1 region spans residues 18 to 79 (ALIESYQNLT…NNVLQLLDIQ (62 aa)). In terms of domain architecture, t-SNARE coiled-coil homology spans 45-107 (KALEETKAYT…DIHKEKVARR (63 aa)). Y53 carries the phosphotyrosine modification. Positions 158 to 285 (AKHGNNQPAR…PGAAPGSQYG (128 aa)) are disordered. A compositionally biased stretch (polar residues) spans 161–175 (GNNQPARTGTLSRTN). T174 and T178 each carry phosphothreonine. Residues S183 and S187 each carry the phosphoserine modification. At Y213 the chain carries Phosphotyrosine. T215 is subject to Phosphothreonine. Phosphoserine is present on residues S216, S222, and S225. The span at 222-235 (SQHSPGRTASLNQR) shows a compositional bias: polar residues. Low complexity-rich tracts occupy residues 248–258 (SRENSGSSSIG) and 272–282 (GPAAPGAAPGS). 2 positions are modified to phosphoserine: S292 and S296. 2 disordered regions span residues 318-348 (AQPH…LTPQ) and 361-392 (NIAD…PPPV). 2 stretches are compositionally biased toward pro residues: residues 366 to 376 (PTPPPPPPPDD) and 383 to 392 (SPPPPPPPPV). The SH3 domain occupies 419–478 (NYIEKVVAIYDYTKDKDDELSFKEGAIIYVIKKNDDGWFEGVCNRVTGLFPGNYVESIMH). Phosphotyrosine is present on Y428. Phosphoserine is present on S439. Residue T480 is modified to Phosphothreonine.

This sequence belongs to the ABI family. As to quaternary structure, interacts with ENAH, Abelson murine leukemia virus V-ABL, ABL1, STX1A, SNAP25, VAMP2, and through its N-terminus with WASF1. Part of a complex consisting of ABI1, STX1A and SNAP25. Part of a complex consisting of ABI1, EPS8 and SOS1. Interacts with EPS8, SOS1, SOS2, GRB2, SPTA1, and the first SH3 domain of NCK1. Component of the WAVE2 complex composed of ABI1, CYFIP1/SRA1, NCKAP1/NAP1 (NCKAP1l/HEM1 in hematopoietic cells) and WASF2/WAVE2. Interacts (via SH3 domain) with SHANK2 and SHANK3, but not SHANK1; the interaction is direct. Interacts with the heterodimer MYC:MAX; the interaction may enhance MYC:MAX transcriptional activity. Interacts with FNBP1L (via the SH3 domain), WASF2, and CDC42, but only in the presence of FNBP1L. Post-translationally, phosphorylated on tyrosine residues after serum stimulation or induction by v-Abl. Seems to be phosphorylated at Tyr-53 by ABL1, required for nuclear but not for synaptic localization. Widely expressed with highest levels in bone marrow, spleen, brain, testes, and embryonic brain. In adult brain prominently expressed in the neocortex, hippocampus and dentate gyrus.

The protein localises to the cytoplasm. Its subcellular location is the nucleus. It is found in the cell projection. The protein resides in the lamellipodium. It localises to the filopodium. The protein localises to the growth cone. Its subcellular location is the postsynaptic density. It is found in the cytoskeleton. In terms of biological role, may act in negative regulation of cell growth and transformation by interacting with nonreceptor tyrosine kinases ABL1 and/or ABL2. In vitro, at least isoform 2 and isoform 4 suppress the transforming activity of Abelson murine leukemia virus (v-Abl) after overexpression in fibroblasts. May play a role in regulation EGF-induced Erk pathway activation. Involved in cytoskeletal reorganization and EGFR signaling. Together with EPS8 participates in transduction of signals from Ras to Rac. In vitro, a trimeric complex of ABI1, EPS8 and SOS1 exhibits Rac specific guanine nucleotide exchange factor (GEF) activity and ABI1 seems to act as an adapter in the complex. Regulates ABL1/c-Abl-mediated phosphorylation of ENAH. Recruits WASF1 to lamellipodia and there seems to regulate WASF1 protein level. In brain, seems to regulate the dendritic outgrowth and branching as well as to determine the shape and number of synaptic contacts of developing neurons. The protein is Abl interactor 1 of Mus musculus (Mouse).